The sequence spans 861 residues: DNA primase (861 aa).

A CHC2-type zinc finger spans residues 805–843 (CLTRNHKGNRENVLVYLEFKVDNNRILIILWSKCFTTKC).

The protein belongs to the herpesviridae DNA primase family. As to quaternary structure, associates with the helicase and the primase-associated factor to form the helicase-primase factor.

It localises to the host nucleus. In terms of biological role, essential component of the helicase/primase complex. Unwinds the DNA at the replication forks and generates single-stranded DNA for both leading and lagging strand synthesis. The primase initiates primer synthesis and thereby produces large amount of short RNA primers on the lagging strand that the polymerase elongates using dNTPs. This Human herpesvirus 7 (strain JI) (HHV-7) protein is DNA primase (U43).